The sequence spans 420 residues: Serine hydroxymethyltransferase (420 aa).

Residues L121 and G125–L127 contribute to the (6S)-5,6,7,8-tetrahydrofolate site. K230 carries the N6-(pyridoxal phosphate)lysine modification. S354–F356 serves as a coordination point for (6S)-5,6,7,8-tetrahydrofolate.

The protein belongs to the SHMT family. Homodimer. Pyridoxal 5'-phosphate serves as cofactor.

It is found in the cytoplasm. The enzyme catalyses (6R)-5,10-methylene-5,6,7,8-tetrahydrofolate + glycine + H2O = (6S)-5,6,7,8-tetrahydrofolate + L-serine. Its pathway is one-carbon metabolism; tetrahydrofolate interconversion. The protein operates within amino-acid biosynthesis; glycine biosynthesis; glycine from L-serine: step 1/1. Functionally, catalyzes the reversible interconversion of serine and glycine with tetrahydrofolate (THF) serving as the one-carbon carrier. This reaction serves as the major source of one-carbon groups required for the biosynthesis of purines, thymidylate, methionine, and other important biomolecules. Also exhibits THF-independent aldolase activity toward beta-hydroxyamino acids, producing glycine and aldehydes, via a retro-aldol mechanism. This Rickettsia africae (strain ESF-5) protein is Serine hydroxymethyltransferase.